The primary structure comprises 93 residues: MNQEAASNLGLDLKLNISPSLDSSLLTESSSSSLCSEEAEGGGGEAKSMVVVGCPNCIMYIITSLENDPRCPRCNSHVLLDFLTGNHSKKSTS.

The segment covering 23-36 (SSLLTESSSSSLCS) has biased composition (low complexity). A disordered region spans residues 23 to 46 (SSLLTESSSSSLCSEEAEGGGGEA).

Its activity is regulated as follows. Triggered by EIN3. Its function is as follows. Involved in ethylene-dependent salt stress responses by reducing reactive oxygen species (ROS) accumulation. The polypeptide is Protein salt-induced and EIN3/EIL1-dependent 1 (Arabidopsis thaliana (Mouse-ear cress)).